Here is a 150-residue protein sequence, read N- to C-terminus: UPF0098 protein TC_0109 (150 aa).

The protein belongs to the UPF0098 family.

This is UPF0098 protein TC_0109 from Chlamydia muridarum (strain MoPn / Nigg).